A 552-amino-acid chain; its full sequence is Glucose-6-phosphate isomerase (552 aa).

Glutamate 359 (proton donor) is an active-site residue. Residues histidine 390 and lysine 514 contribute to the active site.

Belongs to the GPI family.

Its subcellular location is the cytoplasm. The enzyme catalyses alpha-D-glucose 6-phosphate = beta-D-fructose 6-phosphate. It functions in the pathway carbohydrate biosynthesis; gluconeogenesis. Its pathway is carbohydrate degradation; glycolysis; D-glyceraldehyde 3-phosphate and glycerone phosphate from D-glucose: step 2/4. Catalyzes the reversible isomerization of glucose-6-phosphate to fructose-6-phosphate. This chain is Glucose-6-phosphate isomerase, found in Streptomyces griseus subsp. griseus (strain JCM 4626 / CBS 651.72 / NBRC 13350 / KCC S-0626 / ISP 5235).